A 76-amino-acid polypeptide reads, in one-letter code: UPF0291 protein GWCH70_1239 (76 aa).

The interval 54-76 is disordered; it reads VIDPNGNDVTPKKLKESQKSRLH. Residues 63–76 are compositionally biased toward basic and acidic residues; the sequence is TPKKLKESQKSRLH.

Belongs to the UPF0291 family.

The protein localises to the cytoplasm. The chain is UPF0291 protein GWCH70_1239 from Geobacillus sp. (strain WCH70).